A 175-amino-acid polypeptide reads, in one-letter code: Apoptosis regulator Bcl-2 homolog (175 aa).

Positions 75–94 (QVLEDKINWGRIITIIAFCA) match the BH1 motif. Positions 105–120 (SPQYYDGIISEAITDA) match the BH2 motif.

This sequence belongs to the Bcl-2 family. Interacts with host BAX; this interaction inhibits BAX oligomerization and subsequent activation. Interacts with host BAK1.

The protein localises to the host mitochondrion. Functionally, plays a role in the inhibition of host apoptosis by sequestering and inactivating multiple proapoptotic BCL-2 proteins, including BAK1 and BAX. The protein is Apoptosis regulator Bcl-2 homolog of Vertebrata (FPV).